The primary structure comprises 562 residues: Dihydroxy-acid dehydratase (562 aa).

A Mg(2+)-binding site is contributed by aspartate 80. Position 121 (cysteine 121) interacts with [2Fe-2S] cluster. Mg(2+) is bound by residues aspartate 122 and lysine 123. Residue lysine 123 is modified to N6-carboxylysine. Cysteine 194 contributes to the [2Fe-2S] cluster binding site. A Mg(2+)-binding site is contributed by glutamate 446. Residue serine 472 is the Proton acceptor of the active site.

This sequence belongs to the IlvD/Edd family. Homodimer. The cofactor is [2Fe-2S] cluster. Requires Mg(2+) as cofactor.

The catalysed reaction is (2R)-2,3-dihydroxy-3-methylbutanoate = 3-methyl-2-oxobutanoate + H2O. It catalyses the reaction (2R,3R)-2,3-dihydroxy-3-methylpentanoate = (S)-3-methyl-2-oxopentanoate + H2O. It functions in the pathway amino-acid biosynthesis; L-isoleucine biosynthesis; L-isoleucine from 2-oxobutanoate: step 3/4. The protein operates within amino-acid biosynthesis; L-valine biosynthesis; L-valine from pyruvate: step 3/4. Functions in the biosynthesis of branched-chain amino acids. Catalyzes the dehydration of (2R,3R)-2,3-dihydroxy-3-methylpentanoate (2,3-dihydroxy-3-methylvalerate) into 2-oxo-3-methylpentanoate (2-oxo-3-methylvalerate) and of (2R)-2,3-dihydroxy-3-methylbutanoate (2,3-dihydroxyisovalerate) into 2-oxo-3-methylbutanoate (2-oxoisovalerate), the penultimate precursor to L-isoleucine and L-valine, respectively. In Staphylococcus haemolyticus (strain JCSC1435), this protein is Dihydroxy-acid dehydratase.